The chain runs to 474 residues: Serine--tRNA ligase (474 aa).

278–280 (TAE) is an L-serine binding site. 309–311 (RSE) is a binding site for ATP. Glutamate 332 is a binding site for L-serine. An ATP-binding site is contributed by 396–399 (EISS). Residue serine 432 coordinates L-serine.

It belongs to the class-II aminoacyl-tRNA synthetase family. Type-1 seryl-tRNA synthetase subfamily. As to quaternary structure, homodimer. The tRNA molecule binds across the dimer.

The protein localises to the cytoplasm. The enzyme catalyses tRNA(Ser) + L-serine + ATP = L-seryl-tRNA(Ser) + AMP + diphosphate + H(+). It catalyses the reaction tRNA(Sec) + L-serine + ATP = L-seryl-tRNA(Sec) + AMP + diphosphate + H(+). Its pathway is aminoacyl-tRNA biosynthesis; selenocysteinyl-tRNA(Sec) biosynthesis; L-seryl-tRNA(Sec) from L-serine and tRNA(Sec): step 1/1. In terms of biological role, catalyzes the attachment of serine to tRNA(Ser). Is also able to aminoacylate tRNA(Sec) with serine, to form the misacylated tRNA L-seryl-tRNA(Sec), which will be further converted into selenocysteinyl-tRNA(Sec). The sequence is that of Serine--tRNA ligase from Caulobacter sp. (strain K31).